We begin with the raw amino-acid sequence, 298 residues long: Glutamyl-Q tRNA(Asp) synthetase (298 aa).

L-glutamate-binding positions include 9 to 13 and Glu-45; that span reads RFAPS. A 'HIGH' region motif is present at residues 12–22; that stretch reads PSPSGELHFGS. Zn(2+) is bound by residues Cys-101, Cys-103, Tyr-115, and Cys-119. Residues Tyr-172 and Arg-190 each contribute to the L-glutamate site. The short motif at 228–232 is the 'KMSKS' region element; it reads KLSKQ. An ATP-binding site is contributed by Lys-231.

Belongs to the class-I aminoacyl-tRNA synthetase family. GluQ subfamily. It depends on Zn(2+) as a cofactor.

Functionally, catalyzes the tRNA-independent activation of glutamate in presence of ATP and the subsequent transfer of glutamate onto a tRNA(Asp). Glutamate is transferred on the 2-amino-5-(4,5-dihydroxy-2-cyclopenten-1-yl) moiety of the queuosine in the wobble position of the QUC anticodon. The polypeptide is Glutamyl-Q tRNA(Asp) synthetase (Salmonella choleraesuis (strain SC-B67)).